The sequence spans 240 residues: Thyroid transcription factor 1-associated protein 26 (240 aa).

The disordered stretch occupies residues 104–181 (LRKQQRKAGL…QEEYERVQAK (78 aa)). Low complexity predominate over residues 131-149 (TEQTSSEEPPGGHQPQPEE). The segment covering 171-181 (AQEEYERVQAK) has biased composition (basic and acidic residues).

The protein belongs to the TAP26 family. Interacts with NKX2-1.

The protein resides in the nucleus. Component of the transcription complexes of the pulmonary surfactant-associated protein-B (SFTPB) and -C (SFTPC). Enhances homeobox protein Nkx-2.1-activated SFTPB and SFTPC promoter activities. The chain is Thyroid transcription factor 1-associated protein 26 (Ccdc59) from Mus musculus (Mouse).